A 199-amino-acid polypeptide reads, in one-letter code: dITP/XTP pyrophosphatase (199 aa).

A substrate-binding site is contributed by 12–17 (SGNAGK). The Proton acceptor role is filled by Asp73. A Mg(2+)-binding site is contributed by Asp73. Substrate-binding positions include Ser74, 157-160 (FGYD), Lys180, and 185-186 (HR).

Belongs to the HAM1 NTPase family. Homodimer. Mg(2+) is required as a cofactor.

It catalyses the reaction XTP + H2O = XMP + diphosphate + H(+). The enzyme catalyses dITP + H2O = dIMP + diphosphate + H(+). It carries out the reaction ITP + H2O = IMP + diphosphate + H(+). Functionally, pyrophosphatase that catalyzes the hydrolysis of nucleoside triphosphates to their monophosphate derivatives, with a high preference for the non-canonical purine nucleotides XTP (xanthosine triphosphate), dITP (deoxyinosine triphosphate) and ITP. Seems to function as a house-cleaning enzyme that removes non-canonical purine nucleotides from the nucleotide pool, thus preventing their incorporation into DNA/RNA and avoiding chromosomal lesions. This Neisseria meningitidis serogroup A / serotype 4A (strain DSM 15465 / Z2491) protein is dITP/XTP pyrophosphatase.